Here is a 693-residue protein sequence, read N- to C-terminus: Sodium-dependent phosphate transport protein 2B (693 aa).

Positions 1–46 (MAPWPELENSQPTSEKYTVKADGEQSAKPEKAKETEKDDTGTPITK) are disordered. Topologically, residues 1–89 (MAPWPELENS…KWSERDTKGK (89 aa)) are cytoplasmic. Basic and acidic residues predominate over residues 17-40 (YTVKADGEQSAKPEKAKETEKDDT). The helical transmembrane segment at 90–110 (ILCVFQGIGKFILLLVFLYFF) threads the bilayer. Residues 111-135 (VCSLDVLSSAFQLVGGKVAGKFFNN) lie on the Extracellular side of the membrane. The helical transmembrane segment at 136–156 (NSIMSNPLAGMVIGVLVTVLV) threads the bilayer. Residues 157-212 (QSSSTSTSIVVSMVASSLLPVHAAIPIIMGANIGTSITNTIVALMQAGDRKEFRRA) are Cytoplasmic-facing. The chain crosses the membrane as a helical span at residues 213–233 (FAGATVHDFFNWLSVLVLLPL). Over 234–361 (EAATGYLERL…IFVNFNLSDA (128 aa)) the chain is Extracellular. A disulfide bridge connects residues Cys302 and Cys349. Residues Asn307 and Asn320 are each glycosylated (N-linked (GlcNAc...) asparagine). Residues 362–382 (IVGTILLITSLLILCTCLILI) form a helical membrane-spanning segment. The Cytoplasmic portion of the chain corresponds to 383-408 (VKLLGSVLRGQVAAVIKKTINTDFPY). The helical transmembrane segment at 409-429 (PFSWVTGYLAILVGAGMTFIV) threads the bilayer. Residues 430 to 485 (QSSSVFTSAMTPLIGIGVISIQRAYPLTLGANIGTTTTAILAALASPGSTLKSSLQ) lie on the Extracellular side of the membrane. Residues 486–506 (IALCHFFFNISGIILWYPIPF) traverse the membrane as a helical segment. The Cytoplasmic portion of the chain corresponds to 507 to 525 (TRLPIRLAKGLGNISSKYR). A helical transmembrane segment spans residues 526–546 (WFAIVYLIVFFLLIPLAVFGL). Over 547–550 (SLIG) the chain is Extracellular. The chain crosses the membrane as a helical span at residues 551 to 571 (WPVLVGVASPIVLVILLVVVL). Over 572–693 (KILQSFCPGS…TKIVSSVTAL (122 aa)) the chain is Cytoplasmic.

The protein belongs to the SLC34A transporter family. In terms of processing, glycosylated.

It localises to the apical cell membrane. It catalyses the reaction 3 Na(+)(out) + phosphate(out) = 3 Na(+)(in) + phosphate(in). Functionally, involved in actively transporting phosphate into cells via Na(+) cotransport. The sequence is that of Sodium-dependent phosphate transport protein 2B (SLC34A2) from Bos taurus (Bovine).